A 358-amino-acid chain; its full sequence is Nicotinate-nucleotide--dimethylbenzimidazole phosphoribosyltransferase (358 aa).

The active-site Proton acceptor is E314.

Belongs to the CobT family.

It catalyses the reaction 5,6-dimethylbenzimidazole + nicotinate beta-D-ribonucleotide = alpha-ribazole 5'-phosphate + nicotinate + H(+). It functions in the pathway nucleoside biosynthesis; alpha-ribazole biosynthesis; alpha-ribazole from 5,6-dimethylbenzimidazole: step 1/2. Its function is as follows. Catalyzes the synthesis of alpha-ribazole-5'-phosphate from nicotinate mononucleotide (NAMN) and 5,6-dimethylbenzimidazole (DMB). The protein is Nicotinate-nucleotide--dimethylbenzimidazole phosphoribosyltransferase of Mycobacterium marinum (strain ATCC BAA-535 / M).